The sequence spans 76 residues: Conotoxin MaIr332 (76 aa).

A signal peptide spans 1-21 (MKLTCVIVAVLFLTAWTFVTA). A propeptide spanning residues 22–48 (DDSGNGLENLFSKAHHEMKNPKDSKLN) is cleaved from the precursor. Disulfide bonds link C51–C66, C58–C70, and C65–C75.

The protein belongs to the conotoxin O1 superfamily. As to expression, expressed by the venom duct.

It localises to the secreted. The chain is Conotoxin MaIr332 from Conus marmoreus (Marble cone).